Consider the following 1915-residue polypeptide: Protein NLRC5 (1915 aa).

The interval 103-137 (LGAGEESCPGPQLYHGAKRPFQSYGSSPRRKNSKK) is disordered. The region spanning 223-542 (RVTVLLGKAG…HTVDKDTLVE (320 aa)) is the NACHT domain. 229–236 (GKAGMGKT) provides a ligand contact to ATP. LRR repeat units lie at residues 622-646 (VAET…SFHN), 716-740 (MGSL…LIQT), 744-771 (CSQL…LLPS), 772-796 (LPKL…LVKV), 871-898 (SPQL…AASQ), 900-923 (HIAQ…VLKA), 930-953 (LEDL…PREQ), 1006-1033 (THNL…LLPG), 1034-1055 (LGPL…VFSL), 1138-1161 (EVQL…LPQL), 1162-1184 (PQLS…LLAD), 1240-1263 (CNAL…CLLE), 1265-1292 (LPQL…LLET), 1348-1371 (AQQL…MLLN), 1481-1504 (SKLL…FSQV), 1519-1542 (CHHL…LLMG), 1552-1575 (KLHL…LSRM), 1576-1598 (TLLQ…CLAA), 1603-1626 (LPEL…CLAA), 1631-1654 (LPEL…CLAA), 1659-1682 (LPEL…CLAA), 1687-1711 (LPEL…LVKS), 1715-1738 (FEHL…ELAQ), 1741-1768 (PPQL…ALEQ), 1769-1795 (CPHI…RLPL), 1821-1845 (FPAL…LAQV), and 1849-1872 (MGQL…LLAQ).

This sequence belongs to the NLRP family. As to quaternary structure, interacts with CHUK and IKBKB; prevents CHUK and IKBKB phosphorylation and inhibits their kinase activity. Interacts with RIGI and IFIH1; blocks the interaction of MAVS to RIGI. Expressed in spleen, thymus and lung.

It is found in the cytoplasm. Functionally, probable regulator of the NF-kappa-B and type I interferon signaling pathways. May also regulate the type II interferon signaling pathway. Plays a role in homeostatic control of innate immunity and in antiviral defense mechanisms. The polypeptide is Protein NLRC5 (Nlrc5) (Mus musculus (Mouse)).